Here is a 133-residue protein sequence, read N- to C-terminus: Arsenate reductase 1 (133 aa).

Residues Cys10, Cys82, and Cys89 each act as nucleophile in the active site. 2 disulfides stabilise this stretch: Cys10/Cys82 and Cys82/Cys89.

It belongs to the low molecular weight phosphotyrosine protein phosphatase family. Thioredoxin-coupled ArsC subfamily.

It is found in the cytoplasm. It carries out the reaction arsenate + [thioredoxin]-dithiol + H(+) = arsenite + [thioredoxin]-disulfide + H2O. Catalyzes the reduction of arsenate [As(V)] to arsenite [As(III)]. This chain is Arsenate reductase 1, found in Staphylococcus haemolyticus (strain JCSC1435).